Reading from the N-terminus, the 2498-residue chain is Nuclear receptor corepressor 1 (2498 aa).

Disordered stretches follow at residues 1 to 38 (MSSS…QQEY), 54 to 84 (IQQQ…SGYD), 134 to 169 (SEVK…SKLS), and 198 to 223 (QQQL…VEQK). Composition is skewed to basic and acidic residues over residues 71–82 (PVSDRPQDRRSG), 134–148 (SEVK…KHES), and 204–213 (EAAKPPEPEK). The interaction with tbl1xr1-A stretch occupies residues 154–304 (SGQPGDDQDA…REQNICQRYD (151 aa)). The stretch at 168-208 (LSKEELIQSMDRVDREIAKVEQQILKLKKKQQQLEEEAAKP) forms a coiled coil. The 52-residue stretch at 427 to 478 (QFMNVWTDHEKEIFKEKFVRHPKNFGLIASYLERKNVSDCVLYYYLTKKNEN) folds into the SANT 1 domain. Positions 483-493 (VRRNYPKRRGR) are enriched in basic residues. Disordered stretches follow at residues 483–649 (VRRN…GSKS), 668–912 (NLLQ…FGSR), 1075–1122 (SLSD…GTPG), 1417–1436 (DLVS…IMEG), 1470–1583 (SWGV…QRES), 1737–1851 (PGTQ…AQES), and 1916–1990 (PQME…TAHT). Basic and acidic residues-rich tracts occupy residues 502–525 (SQEE…KEDE) and 535–548 (KEEL…KIDA). Residues 502 to 552 (SQEEKEIEKVEEEKADRNDKKEDERREEEEKEEKEELREGAKDKIDAVAED) adopt a coiled-coil conformation. Over residues 582 to 611 (ASEAAAANAVTTATTAPVTTTSTATTVAPV) the composition is skewed to low complexity. Over residues 612-627 (PVAPPPEEPTPPPPPQ) the composition is skewed to pro residues. The 38-residue stretch at 628-665 (EQSLVDHGRNWGAIAKMVGSKSESQCKNFYFNYKRRHN) folds into the SANT 2 domain. A compositionally biased stretch (polar residues) spans 689–699 (QCDSIASTVSA). The segment covering 700–719 (QEDDENEASNEEENPEDSEG) has biased composition (acidic residues). Low complexity-rich tracts occupy residues 727 to 738 (ESAPSPSPAEAA) and 761 to 774 (DAAS…SPSP). A compositionally biased stretch (basic and acidic residues) spans 854–863 (MERLMDRAEA). 2 stretches are compositionally biased toward polar residues: residues 872-891 (QNIS…SATC) and 1102-1122 (ATSS…GTPG). A compositionally biased stretch (basic and acidic residues) spans 1484-1501 (KMGERSKHEDTKSSDAIR). The span at 1505–1516 (TSVVSSGPSVLR) shows a compositional bias: polar residues. The segment covering 1545 to 1558 (PSPMSRSSPMARSA) has biased composition (low complexity). A coiled-coil region spans residues 1765-1804 (VSAERERERERERERDREREKEQRERESDRERERDRLAHA). Positions 1767–1802 (AERERERERERERDREREKEQRERESDRERERDRLA) are enriched in basic and acidic residues. Low complexity-rich tracts occupy residues 1803 to 1813 (HAAAAAAAASA) and 1820 to 1835 (RPVS…RPSS). Positions 1842–1851 (PSPSVRAQES) are enriched in polar residues. The span at 1921–1942 (AKPKESKNDSARSEENLSRRNA) shows a compositional bias: basic and acidic residues. Residues 1958–1980 (SPYTSSSFSSSKSQSQPSSAVYS) are compositionally biased toward low complexity. The short motif at 2012–2016 (IDVII) is the CORNR box 1 element. The interval 2022–2109 (SDKDGRERNS…SPPQQTIPGH (88 aa)) is disordered. Residues 2031–2040 (SQSSDASSSH) are compositionally biased toward low complexity. Residues 2043 to 2052 (HRYEAPRETI) show a composition bias toward basic and acidic residues. Over residues 2093–2106 (RYRQQQESPPQQTI) the composition is skewed to polar residues. The CORNR box 2 motif lies at 2123–2127 (ICHII). Residues 2136–2145 (PVNQPLQQPP) show a composition bias toward low complexity. The interval 2136–2222 (PVNQPLQQPP…PISPPQAPML (87 aa)) is disordered. Residues 2146–2175 (ASTFQSTNPTSTAVRTKASSRFSPESQVQP) are compositionally biased toward polar residues. Residues 2190–2209 (IPDKPRGRPGKSPDRGHISE) show a composition bias toward basic and acidic residues. The short motif at 2326 to 2330 (LEDII) is the CORNR box 3 element. 2 disordered regions span residues 2344 to 2446 (DHGV…YNPL) and 2464 to 2498 (TSMT…DSDE). The segment covering 2353-2362 (QGNQSGTPNS) has biased composition (polar residues). Positions 2380–2394 (HKQKLISKYGSRKTK) are enriched in basic residues. 2 stretches are compositionally biased toward polar residues: residues 2464-2476 (TSMT…QQSR) and 2489-2498 (QYETLSDSDE).

The protein belongs to the N-CoR nuclear receptor corepressors family. As to quaternary structure, forms a large corepressor complex that contains sin3a/b, histone deacetylases hdac1 and hdac2, rbbp4 and possibly rbbp7. Interacts with the thyroid receptor (TR, composed of rxra and thrb) and the retinoid acid receptor (RAR, composed of rxra and rara) in the absence of ligand. Interacts with tbl1xr1-A and possibly tbl1xr1-B. Interacts with zbtb33/kaiso.

It is found in the nucleus. In terms of biological role, mediates transcriptional repression by certain nuclear receptors. Participates in complexes which promote histone deacetylation and the formation of repressive chromatin structures which may impede access by the basal transcription machinery. In association with hdac3, may play a role in the regulation of the circadian clock. This is Nuclear receptor corepressor 1 (ncor1) from Xenopus laevis (African clawed frog).